A 122-amino-acid polypeptide reads, in one-letter code: Basic phospholipase A2 homolog myotoxin II (122 aa).

7 disulfides stabilise this stretch: C26–C116, C28–C44, C43–C95, C49–C122, C50–C88, C57–C81, and C75–C86. Residues 105-118 form an important for membrane-damaging activities in eukaryotes and bacteria; heparin-binding region; sequence KKYRYNYLKPFCKK.

It belongs to the phospholipase A2 family. Group II subfamily. K49 sub-subfamily. Homodimer; non-covalently linked (probable alternative/compact dimer conformation). Expressed by the venom gland.

The protein localises to the secreted. With respect to regulation, myotoxic activity is inhibited by suramin and rosmarinic acid. Cytotoxic and myotoxic activities are inhibited by pre-incubation with varespladib. Suramin inhibits this myotoxin by (i) direct blockage of the MDoS and MDiS, preventing the toxin/membrane interaction and disruption and (ii) formation of an oligomeric complex, resulting in a tetrameric configuration for which both MDoS and MDiS becomes physically inaccessible, thus avoiding any possibility of toxin-membrane interaction or disruption. Heparin completely inhibits the cytotoxic and bactericidal activities, but only partially the myotoxic, edema-inducing and lethal effects. In terms of biological role, snake venom phospholipase A2 (PLA2) homolog that lacks enzymatic activity. Shows high myotoxin activities. Also shows neurotoxicity, since it induces muscle paralysis when tested on mouse phrenic-diaphragm preparations. Displays edema-inducing activities. Also displays antimicrobial activity against E.coli and C.albicans, as well as antitumoral activity against some human and mice cell lines. In addition, it is effective as parasiticidal agent against Leishmania sp. and S.mansoni. It also disrupts negatively charged liposomes in a dose- and temperature-dependent manner and shows toxicity by intraperitoneal route. In contrast to other phospholipase A2-like toxins, this myotoxin does not require fatty acid binding to be active. This is Basic phospholipase A2 homolog myotoxin II from Bothrops moojeni (Lance-headed viper).